The sequence spans 207 residues: MANVTLFDQTGKQAGEVVLNDAIFGIEPNQAVVFDVIISQRASLRQGTHAVKNRSAVSGGGRKPWRQKGTGRARQGSIRSPQWRGGGVVFGPTPRSYAYKLPQKVRRLALKSVYSEKVAENKFVAVNSLEFTAPKTAEFAKVLAALSIDSKVLVILEEGNEFAALSARNIPGVKVATATTASVLDIANADKLLVTQAAISKIEEVLA.

Residues 49-78 (HAVKNRSAVSGGGRKPWRQKGTGRARQGSI) are disordered.

It belongs to the universal ribosomal protein uL4 family. As to quaternary structure, part of the 50S ribosomal subunit.

Its function is as follows. One of the primary rRNA binding proteins, this protein initially binds near the 5'-end of the 23S rRNA. It is important during the early stages of 50S assembly. It makes multiple contacts with different domains of the 23S rRNA in the assembled 50S subunit and ribosome. In terms of biological role, forms part of the polypeptide exit tunnel. The chain is Large ribosomal subunit protein uL4 from Streptococcus suis (strain 98HAH33).